The following is a 396-amino-acid chain: Probable porphobilinogen deaminase (396 aa).

A disordered region spans residues 159–224 (APALHREHER…DTASSSEFEQ (66 aa)). The interval 159–245 (APALHREHER…LQQSAMERDP (87 aa)) is insert. Basic and acidic residues predominate over residues 162 to 189 (LHREHERRTEAEKEAQSRDAREQRRGDY). Residues 200 to 215 (LDTEDGEEGAADDGDD) show a composition bias toward acidic residues. Residue Cys-328 is modified to S-(dipyrrolylmethanemethyl)cysteine.

It belongs to the HMBS family. Dipyrromethane serves as cofactor.

It carries out the reaction 4 porphobilinogen + H2O = hydroxymethylbilane + 4 NH4(+). Its pathway is porphyrin-containing compound metabolism; protoporphyrin-IX biosynthesis; coproporphyrinogen-III from 5-aminolevulinate: step 2/4. Its function is as follows. Tetrapolymerization of the monopyrrole PBG into the hydroxymethylbilane pre-uroporphyrinogen in several discrete steps. The protein is Probable porphobilinogen deaminase (hemC) of Halobacterium salinarum (strain ATCC 700922 / JCM 11081 / NRC-1) (Halobacterium halobium).